Reading from the N-terminus, the 288-residue chain is uncharacterized protein (288 aa).

2 disordered regions span residues lysine 31–serine 52 and tyrosine 179–lysine 288. A compositionally biased stretch (polar residues) spans arginine 206 to isoleucine 217. Over residues tyrosine 221–alanine 236 the composition is skewed to basic and acidic residues. Composition is skewed to low complexity over residues proline 237 to proline 249 and alanine 267 to alanine 276.

This is an uncharacterized protein from Bos taurus (Bovine).